Consider the following 112-residue polypeptide: Cytochrome c 2.1 (112 aa).

Heme c-binding residues include Cys-20, Cys-23, His-24, and Met-85.

The protein belongs to the cytochrome c family. Binds 1 heme c group covalently per subunit.

Its subcellular location is the mitochondrion intermembrane space. Its function is as follows. Electron carrier protein. The oxidized form of the cytochrome c heme group can accept an electron from the heme group of the cytochrome c1 subunit of cytochrome reductase. Cytochrome c then transfers this electron to the cytochrome oxidase complex, the final protein carrier in the mitochondrial electron-transport chain. This chain is Cytochrome c 2.1, found in Caenorhabditis briggsae.